The chain runs to 181 residues: Adenylate kinase (181 aa).

An ATP-binding site is contributed by 10–15; it reads GAGKGT. Residues 30–59 are NMP; sequence STGDLFRKNIGDGTPLGLEAKRYLDAGDLV. Residues Thr-31, Arg-36, 57–59, 85–88, and Gln-92 each bind AMP; these read DLV and GYPR. The tract at residues 126–132 is LID; the sequence is GRGRADD. ATP is bound at residue Arg-127. Arg-129 and Arg-140 together coordinate AMP. Residue Gly-166 coordinates ATP.

It belongs to the adenylate kinase family. Monomer.

It is found in the cytoplasm. The enzyme catalyses AMP + ATP = 2 ADP. It participates in purine metabolism; AMP biosynthesis via salvage pathway; AMP from ADP: step 1/1. Catalyzes the reversible transfer of the terminal phosphate group between ATP and AMP. Plays an important role in cellular energy homeostasis and in adenine nucleotide metabolism. This Mycolicibacterium smegmatis (strain ATCC 700084 / mc(2)155) (Mycobacterium smegmatis) protein is Adenylate kinase.